The following is a 319-amino-acid chain: Methionyl-tRNA formyltransferase (319 aa).

Residue 116-119 (SLLP) coordinates (6S)-5,6,7,8-tetrahydrofolate.

It belongs to the Fmt family.

It catalyses the reaction L-methionyl-tRNA(fMet) + (6R)-10-formyltetrahydrofolate = N-formyl-L-methionyl-tRNA(fMet) + (6S)-5,6,7,8-tetrahydrofolate + H(+). Its function is as follows. Attaches a formyl group to the free amino group of methionyl-tRNA(fMet). The formyl group appears to play a dual role in the initiator identity of N-formylmethionyl-tRNA by promoting its recognition by IF2 and preventing the misappropriation of this tRNA by the elongation apparatus. The protein is Methionyl-tRNA formyltransferase of Wigglesworthia glossinidia brevipalpis.